Reading from the N-terminus, the 396-residue chain is Elongation factor Tu (396 aa).

The tr-type G domain maps to 10–206; the sequence is KPHVNVGTIG…ALDSYIPTPE (197 aa). Residues 19-26 are G1; the sequence is GHVDHGKT. 19 to 26 contacts GTP; it reads GHVDHGKT. Thr26 lines the Mg(2+) pocket. Residues 60–64 are G2; it reads GITIN. Positions 81 to 84 are G3; sequence DCPG. GTP is bound by residues 81–85 and 136–139; these read DCPGH and NKCD. Residues 136-139 are G4; sequence NKCD. The tract at residues 174–176 is G5; that stretch reads SAK.

It belongs to the TRAFAC class translation factor GTPase superfamily. Classic translation factor GTPase family. EF-Tu/EF-1A subfamily. Monomer.

It localises to the cytoplasm. The catalysed reaction is GTP + H2O = GDP + phosphate + H(+). Its function is as follows. GTP hydrolase that promotes the GTP-dependent binding of aminoacyl-tRNA to the A-site of ribosomes during protein biosynthesis. The protein is Elongation factor Tu of Methylibium petroleiphilum (strain ATCC BAA-1232 / LMG 22953 / PM1).